A 450-amino-acid polypeptide reads, in one-letter code: Glucose-6-phosphate isomerase (450 aa).

Thr-39 carries the phosphothreonine modification. Residue Glu-291 is the Proton donor of the active site. Residues His-312 and Lys-426 contribute to the active site.

It belongs to the GPI family.

The protein localises to the cytoplasm. The catalysed reaction is alpha-D-glucose 6-phosphate = beta-D-fructose 6-phosphate. It functions in the pathway carbohydrate biosynthesis; gluconeogenesis. Its pathway is carbohydrate degradation; glycolysis; D-glyceraldehyde 3-phosphate and glycerone phosphate from D-glucose: step 2/4. Catalyzes the reversible isomerization of glucose-6-phosphate to fructose-6-phosphate. The protein is Glucose-6-phosphate isomerase of Bacillus cereus (strain ATCC 10987 / NRS 248).